The sequence spans 434 residues: Chaperone SurA (434 aa).

Residues 1 to 22 form the signal peptide; that stretch reads MKPSKHLIFALFALAISQPTMA. PpiC domains lie at 173–274 and 283–383; these read DVEY…KIMD and IEEV…QLEE.

The protein localises to the periplasm. It catalyses the reaction [protein]-peptidylproline (omega=180) = [protein]-peptidylproline (omega=0). Chaperone involved in the correct folding and assembly of outer membrane proteins. Recognizes specific patterns of aromatic residues and the orientation of their side chains, which are found more frequently in integral outer membrane proteins. May act in both early periplasmic and late outer membrane-associated steps of protein maturation. The polypeptide is Chaperone SurA (Shewanella sp. (strain MR-4)).